Reading from the N-terminus, the 83-residue chain is MKASMFLALAGLVLLFVVGYASESEEKEFPRELLSKIFALDDFKGEERGCKGFGDSCTPGKNECCPNYACSSKHKWCKVYLGK.

Positions 1 to 21 are cleaved as a signal peptide; that stretch reads MKASMFLALAGLVLLFVVGYA. Positions 22–48 are excised as a propeptide; sequence SESEEKEFPRELLSKIFALDDFKGEER. Intrachain disulfides connect C50–C65, C57–C70, and C64–C77. A Leucine amide modification is found at L81.

Belongs to the neurotoxin 10 (Hwtx-1) family. 15 (Hntx-3) subfamily. In terms of assembly, monomer. As to expression, expressed by the venom gland.

Its subcellular location is the secreted. Functionally, selective antagonist of neuronal tetrodotoxin (TTX)-sensitive voltage-gated sodium channels (IC(50)=1270 nM on Nav1.1/SCN1A, 270 nM on Nav1.2/SCN2A, 491 nM on Nav1.3/SCN3A and 232 nM on Nav1.7/SCN9A). This toxin suppress Nav1.7 current amplitude without significantly altering the activation, inactivation, and repriming kinetics. Short extreme depolarizations partially activate the toxin-bound channel, indicating voltage-dependent inhibition of this toxin. This toxin increases the deactivation of the Nav1.7 current after extreme depolarizations. The toxin-Nav1.7 complex is gradually dissociated upon prolonged strong depolarizations in a voltage-dependent manner, and the unbound toxin rebinds to Nav1.7 after a long repolarization. Moreover, analysis of chimeric channels showed that the DIIS3-S4 linker is critical for toxin binding to Nav1.7. These data are consistent with this toxin interacting with Nav1.7 site 4 and trapping the domain II voltage sensor in the closed state. This chain is Hainantoxin-III, found in Cyriopagopus hainanus (Chinese bird spider).